The primary structure comprises 191 residues: Dirigent protein 3 (191 aa).

A signal peptide spans 1 to 21 (MSKLILILTAQILLLTATALA). N-linked (GlcNAc...) asparagine glycosylation is found at N96 and N131.

Belongs to the plant dirigent protein family. Homodimer.

It is found in the secreted. Its subcellular location is the extracellular space. The protein localises to the apoplast. Dirigent proteins impart stereoselectivity on the phenoxy radical-coupling reaction, yielding optically active lignans from two molecules of coniferyl alcohol in the biosynthesis of lignans, flavonolignans, and alkaloids and thus plays a central role in plant secondary metabolism. The protein is Dirigent protein 3 (DIR3) of Arabidopsis thaliana (Mouse-ear cress).